Reading from the N-terminus, the 127-residue chain is Large ribosomal subunit protein bL12 (127 aa).

This sequence belongs to the bacterial ribosomal protein bL12 family. In terms of assembly, homodimer. Part of the ribosomal stalk of the 50S ribosomal subunit. Forms a multimeric L10(L12)X complex, where L10 forms an elongated spine to which 2 to 4 L12 dimers bind in a sequential fashion. Binds GTP-bound translation factors.

Functionally, forms part of the ribosomal stalk which helps the ribosome interact with GTP-bound translation factors. Is thus essential for accurate translation. The protein is Large ribosomal subunit protein bL12 of Sinorhizobium fredii (strain NBRC 101917 / NGR234).